We begin with the raw amino-acid sequence, 163 residues long: Large ribosomal subunit protein uL10 (163 aa).

The protein belongs to the universal ribosomal protein uL10 family. Part of the ribosomal stalk of the 50S ribosomal subunit. The N-terminus interacts with L11 and the large rRNA to form the base of the stalk. The C-terminus forms an elongated spine to which L12 dimers bind in a sequential fashion forming a multimeric L10(L12)X complex.

Functionally, forms part of the ribosomal stalk, playing a central role in the interaction of the ribosome with GTP-bound translation factors. The chain is Large ribosomal subunit protein uL10 from Haemophilus influenzae (strain PittEE).